The primary structure comprises 556 residues: Hydroxylamine reductase (556 aa).

[4Fe-4S] cluster-binding residues include Cys5, Cys8, Cys17, and Cys23. Positions 249, 273, 317, 409, 437, 462, 497, and 499 each coordinate hybrid [4Fe-2O-2S] cluster. Cys409 carries the cysteine persulfide modification.

It belongs to the HCP family. Requires [4Fe-4S] cluster as cofactor. Hybrid [4Fe-2O-2S] cluster serves as cofactor.

The protein resides in the cytoplasm. The enzyme catalyses A + NH4(+) + H2O = hydroxylamine + AH2 + H(+). Catalyzes the reduction of hydroxylamine to form NH(3) and H(2)O. This Kosmotoga olearia (strain ATCC BAA-1733 / DSM 21960 / TBF 19.5.1) protein is Hydroxylamine reductase.